A 530-amino-acid polypeptide reads, in one-letter code: Bifunctional purine biosynthesis protein PurH (530 aa).

Residues 1–148 (MNNARPIRRA…KNHKDVTIVV (148 aa)) form the MGS-like domain.

The protein belongs to the PurH family.

It carries out the reaction (6R)-10-formyltetrahydrofolate + 5-amino-1-(5-phospho-beta-D-ribosyl)imidazole-4-carboxamide = 5-formamido-1-(5-phospho-D-ribosyl)imidazole-4-carboxamide + (6S)-5,6,7,8-tetrahydrofolate. The catalysed reaction is IMP + H2O = 5-formamido-1-(5-phospho-D-ribosyl)imidazole-4-carboxamide. It functions in the pathway purine metabolism; IMP biosynthesis via de novo pathway; 5-formamido-1-(5-phospho-D-ribosyl)imidazole-4-carboxamide from 5-amino-1-(5-phospho-D-ribosyl)imidazole-4-carboxamide (10-formyl THF route): step 1/1. It participates in purine metabolism; IMP biosynthesis via de novo pathway; IMP from 5-formamido-1-(5-phospho-D-ribosyl)imidazole-4-carboxamide: step 1/1. The protein is Bifunctional purine biosynthesis protein PurH of Vibrio parahaemolyticus serotype O3:K6 (strain RIMD 2210633).